Here is a 254-residue protein sequence, read N- to C-terminus: Nickel import ATP-binding protein NikD (254 aa).

Positions 2–241 (PQQIELRNIA…PKHAVTRSLV (240 aa)) constitute an ABC transporter domain. An ATP-binding site is contributed by 36 to 43 (GGSGSGKS).

This sequence belongs to the ABC transporter superfamily. Nickel importer (TC 3.A.1.5.3) family. In terms of assembly, the complex is composed of two ATP-binding proteins (NikD and NikE), two transmembrane proteins (NikB and NikC) and a solute-binding protein (NikA).

Its subcellular location is the cell inner membrane. It carries out the reaction Ni(2+)(out) + ATP + H2O = Ni(2+)(in) + ADP + phosphate + H(+). In terms of biological role, part of the ABC transporter complex NikABCDE involved in nickel import. Responsible for energy coupling to the transport system. The chain is Nickel import ATP-binding protein NikD from Escherichia coli (strain UTI89 / UPEC).